A 135-amino-acid polypeptide reads, in one-letter code: Probable histone H2A.2 (135 aa).

The protein belongs to the histone H2A family. In terms of assembly, the nucleosome is a histone octamer containing two molecules each of H2A, H2B, H3 and H4 assembled in one H3-H4 heterotetramer and two H2A-H2B heterodimers. The octamer wraps approximately 147 bp of DNA.

It is found in the nucleus. The protein resides in the chromosome. Its function is as follows. Core component of nucleosome. Nucleosomes wrap and compact DNA into chromatin, limiting DNA accessibility to the cellular machineries which require DNA as a template. Histones thereby play a central role in transcription regulation, DNA repair, DNA replication and chromosomal stability. DNA accessibility is regulated via a complex set of post-translational modifications of histones, also called histone code, and nucleosome remodeling. The polypeptide is Probable histone H2A.2 (Oryza sativa subsp. indica (Rice)).